The following is a 446-amino-acid chain: Exodeoxyribonuclease 7 large subunit (446 aa).

It belongs to the XseA family. As to quaternary structure, heterooligomer composed of large and small subunits.

Its subcellular location is the cytoplasm. The catalysed reaction is Exonucleolytic cleavage in either 5'- to 3'- or 3'- to 5'-direction to yield nucleoside 5'-phosphates.. In terms of biological role, bidirectionally degrades single-stranded DNA into large acid-insoluble oligonucleotides, which are then degraded further into small acid-soluble oligonucleotides. The chain is Exodeoxyribonuclease 7 large subunit from Streptococcus pneumoniae (strain ATCC 700669 / Spain 23F-1).